The chain runs to 338 residues: Ketol-acid reductoisomerase (NADP(+)) (338 aa).

Residues 1–181 form the KARI N-terminal Rossmann domain; sequence MKVFYDKDAD…GGGRAGIIET (181 aa). NADP(+) is bound by residues 24 to 27, Arg47, and Ser52; that span reads YGSQ. The active site involves His107. Gly133 is a binding site for NADP(+). A KARI C-terminal knotted domain is found at 182-327; it reads NFREETETDL…AKLRAMMPWI (146 aa). Residues Asp190, Glu194, Glu226, and Glu230 each coordinate Mg(2+). Ser251 is a binding site for substrate.

Belongs to the ketol-acid reductoisomerase family. It depends on Mg(2+) as a cofactor.

The catalysed reaction is (2R)-2,3-dihydroxy-3-methylbutanoate + NADP(+) = (2S)-2-acetolactate + NADPH + H(+). It carries out the reaction (2R,3R)-2,3-dihydroxy-3-methylpentanoate + NADP(+) = (S)-2-ethyl-2-hydroxy-3-oxobutanoate + NADPH + H(+). It participates in amino-acid biosynthesis; L-isoleucine biosynthesis; L-isoleucine from 2-oxobutanoate: step 2/4. It functions in the pathway amino-acid biosynthesis; L-valine biosynthesis; L-valine from pyruvate: step 2/4. Functionally, involved in the biosynthesis of branched-chain amino acids (BCAA). Catalyzes an alkyl-migration followed by a ketol-acid reduction of (S)-2-acetolactate (S2AL) to yield (R)-2,3-dihydroxy-isovalerate. In the isomerase reaction, S2AL is rearranged via a Mg-dependent methyl migration to produce 3-hydroxy-3-methyl-2-ketobutyrate (HMKB). In the reductase reaction, this 2-ketoacid undergoes a metal-dependent reduction by NADPH to yield (R)-2,3-dihydroxy-isovalerate. In Polynucleobacter asymbioticus (strain DSM 18221 / CIP 109841 / QLW-P1DMWA-1) (Polynucleobacter necessarius subsp. asymbioticus), this protein is Ketol-acid reductoisomerase (NADP(+)).